A 439-amino-acid polypeptide reads, in one-letter code: Protein translocase subunit SecY (439 aa).

Transmembrane regions (helical) follow at residues 28-48, 73-93, 127-147, 156-176, 179-199, 220-240, 276-296, 318-338, 375-395, and 401-421; these read ILITVGLLILCRLGIFIPVPG, IFSGGGLSALGVFALGILPYI, LTRYVSLGWALLQSIVIAVWV, PLFTIQTALALVAGSMFVMWI, LITERGIGNGASLLIFLNIVA, VGGIVILLIVFLATIVGIVFV, GVMPIIFASAILVLPFSLANF, IYALFYLVLIVAFSYFYSSLI, LTILGAVFLGLVAIIPTAVEG, and TFQGFGATSLLILVGVAIDTA.

This sequence belongs to the SecY/SEC61-alpha family. As to quaternary structure, component of the Sec protein translocase complex. Heterotrimer consisting of SecY, SecE and SecG subunits. The heterotrimers can form oligomers, although 1 heterotrimer is thought to be able to translocate proteins. Interacts with the ribosome. Interacts with SecDF, and other proteins may be involved. Interacts with SecA.

It localises to the cell inner membrane. Its subcellular location is the cellular thylakoid membrane. The central subunit of the protein translocation channel SecYEG. Consists of two halves formed by TMs 1-5 and 6-10. These two domains form a lateral gate at the front which open onto the bilayer between TMs 2 and 7, and are clamped together by SecE at the back. The channel is closed by both a pore ring composed of hydrophobic SecY resides and a short helix (helix 2A) on the extracellular side of the membrane which forms a plug. The plug probably moves laterally to allow the channel to open. The ring and the pore may move independently. This is Protein translocase subunit SecY from Synechococcus elongatus (strain ATCC 33912 / PCC 7942 / FACHB-805) (Anacystis nidulans R2).